We begin with the raw amino-acid sequence, 537 residues long: Zinc finger protein Noc (537 aa).

2 disordered regions span residues 64-116 (NKTK…SLSN) and 138-212 (NQNS…PIVR). Over residues 70-116 (ACSSSSNSSSSSGSAEISAAKSPSGQAKSPKSSTPISSTATSASLSN) the composition is skewed to low complexity. Residues Ser-98 and Ser-157 each carry the phosphoserine modification. Polar residues-rich tracts occupy residues 138–177 (NQNS…NATP) and 188–206 (HDSS…SQRG). At Ser-208 the chain carries Phosphoserine. A C2H2-type zinc finger spans residues 402 to 430 (YVCSWVVGDAYCGKRFQTSDELFSHLRTH).

It belongs to the Elbow/Noc family. As to quaternary structure, interacts with elB. As to expression, highly expressed in the adult head.

Its function is as follows. May negatively regulate Notch-induced cell proliferation in the eye-head primordium. Required for development of the supraesophageal ganglion and ocelli. May act in leg and wing primordia to negatively regulate body-wall specifying genes and thereby promote appendage formation. Plays a role in tracheal development. This chain is Zinc finger protein Noc (noc), found in Drosophila melanogaster (Fruit fly).